We begin with the raw amino-acid sequence, 356 residues long: Alanine racemase (356 aa).

Lys35 acts as the Proton acceptor; specific for D-alanine in catalysis. Lys35 is modified (N6-(pyridoxal phosphate)lysine). Position 130 (Arg130) interacts with substrate. The active-site Proton acceptor; specific for L-alanine is Tyr253. Position 301 (Met301) interacts with substrate.

It belongs to the alanine racemase family. Pyridoxal 5'-phosphate serves as cofactor.

It catalyses the reaction L-alanine = D-alanine. It functions in the pathway amino-acid biosynthesis; D-alanine biosynthesis; D-alanine from L-alanine: step 1/1. In terms of biological role, catalyzes the interconversion of L-alanine and D-alanine. May also act on other amino acids. This is Alanine racemase (alr) from Sodalis glossinidius (strain morsitans).